The following is a 118-amino-acid chain: Immunoglobulin lambda variable 2-8 (118 aa).

The N-terminal stretch at 1–19 (MAWALLLLTLLTQGTGSWA) is a signal peptide. Gln-20 carries the pyrrolidone carboxylic acid modification. Residues 20 to 44 (QSALTQPPSASGSPGQSVTISCTGT) are framework-1. In terms of domain architecture, Ig-like spans 20 to 118 (QSALTQPPSA…CSSYAGSNNF (99 aa)). A disulfide bond links Cys-41 and Cys-109. A complementarity-determining-1 region spans residues 45–53 (SSDVGGYNY). A framework-2 region spans residues 54 to 70 (VSWYQQHPGKAPKLMIY). The tract at residues 71–73 (EVS) is complementarity-determining-2. Positions 74 to 109 (KRPSGVPDRFSGSKSGNTASLTVSGLQAEDEADYYC) are framework-3. Residues 76–97 (PSGVPDRFSGSKSGNTASLTVS) are disordered. A compositionally biased stretch (polar residues) spans 85–97 (GSKSGNTASLTVS). The interval 110–118 (SSYAGSNNF) is complementarity-determining-3.

As to quaternary structure, immunoglobulins are composed of two identical heavy chains and two identical light chains; disulfide-linked.

It is found in the secreted. The protein localises to the cell membrane. Its function is as follows. V region of the variable domain of immunoglobulin light chains that participates in the antigen recognition. Immunoglobulins, also known as antibodies, are membrane-bound or secreted glycoproteins produced by B lymphocytes. In the recognition phase of humoral immunity, the membrane-bound immunoglobulins serve as receptors which, upon binding of a specific antigen, trigger the clonal expansion and differentiation of B lymphocytes into immunoglobulins-secreting plasma cells. Secreted immunoglobulins mediate the effector phase of humoral immunity, which results in the elimination of bound antigens. The antigen binding site is formed by the variable domain of one heavy chain, together with that of its associated light chain. Thus, each immunoglobulin has two antigen binding sites with remarkable affinity for a particular antigen. The variable domains are assembled by a process called V-(D)-J rearrangement and can then be subjected to somatic hypermutations which, after exposure to antigen and selection, allow affinity maturation for a particular antigen. The sequence is that of Immunoglobulin lambda variable 2-8 from Homo sapiens (Human).